A 354-amino-acid chain; its full sequence is Methylthioribose-1-phosphate isomerase (354 aa).

Substrate-binding positions include Arg-58–Ala-60, Arg-101, and Gln-204. Residue Asp-245 is the Proton donor of the active site. Asn-255–Lys-256 contributes to the substrate binding site.

The protein belongs to the eIF-2B alpha/beta/delta subunits family. MtnA subfamily.

It carries out the reaction 5-(methylsulfanyl)-alpha-D-ribose 1-phosphate = 5-(methylsulfanyl)-D-ribulose 1-phosphate. The protein operates within amino-acid biosynthesis; L-methionine biosynthesis via salvage pathway; L-methionine from S-methyl-5-thio-alpha-D-ribose 1-phosphate: step 1/6. Catalyzes the interconversion of methylthioribose-1-phosphate (MTR-1-P) into methylthioribulose-1-phosphate (MTRu-1-P). The chain is Methylthioribose-1-phosphate isomerase from Xylella fastidiosa (strain 9a5c).